Reading from the N-terminus, the 148-residue chain is MTIADNKKAFFDYFVEERYEAGIALEGWEVKAIRAGRVQIKEGYVVIRDAELFLIGAHISPLQSASTHVKPDPTRTRKLLLHAEEIKKLIGKVEQRGYTLVPLNLHYARGRVKCEIGLAKGKKLYDKRETEKDRDWQREKARLMREKA.

Residues 129-148 (ETEKDRDWQREKARLMREKA) form a disordered region.

The protein belongs to the SmpB family.

Its subcellular location is the cytoplasm. Functionally, required for rescue of stalled ribosomes mediated by trans-translation. Binds to transfer-messenger RNA (tmRNA), required for stable association of tmRNA with ribosomes. tmRNA and SmpB together mimic tRNA shape, replacing the anticodon stem-loop with SmpB. tmRNA is encoded by the ssrA gene; the 2 termini fold to resemble tRNA(Ala) and it encodes a 'tag peptide', a short internal open reading frame. During trans-translation Ala-aminoacylated tmRNA acts like a tRNA, entering the A-site of stalled ribosomes, displacing the stalled mRNA. The ribosome then switches to translate the ORF on the tmRNA; the nascent peptide is terminated with the 'tag peptide' encoded by the tmRNA and targeted for degradation. The ribosome is freed to recommence translation, which seems to be the essential function of trans-translation. This Ralstonia nicotianae (strain ATCC BAA-1114 / GMI1000) (Ralstonia solanacearum) protein is SsrA-binding protein.